Consider the following 1385-residue polypeptide: DNA-directed RNA polymerase subunit beta' (1385 aa).

Positions 75, 77, 90, and 93 each coordinate Zn(2+). Residues Asp-466, Asp-468, and Asp-470 each contribute to the Mg(2+) site. Cys-809, Cys-883, Cys-890, and Cys-893 together coordinate Zn(2+).

This sequence belongs to the RNA polymerase beta' chain family. In terms of assembly, the RNAP catalytic core consists of 2 alpha, 1 beta, 1 beta' and 1 omega subunit. When a sigma factor is associated with the core the holoenzyme is formed, which can initiate transcription. The cofactor is Mg(2+). It depends on Zn(2+) as a cofactor.

It carries out the reaction RNA(n) + a ribonucleoside 5'-triphosphate = RNA(n+1) + diphosphate. DNA-dependent RNA polymerase catalyzes the transcription of DNA into RNA using the four ribonucleoside triphosphates as substrates. The chain is DNA-directed RNA polymerase subunit beta' from Nitratidesulfovibrio vulgaris (strain ATCC 29579 / DSM 644 / CCUG 34227 / NCIMB 8303 / VKM B-1760 / Hildenborough) (Desulfovibrio vulgaris).